The chain runs to 265 residues: Undecaprenyl-diphosphatase (265 aa).

7 helical membrane passes run 42 to 62 (ATTF…VLYW), 82 to 102 (GIML…AAHS), 108 to 128 (LFTP…MLLV), 143 to 163 (MSPA…WPGF), 181 to 201 (GLAA…ATGY), 221 to 241 (GFVV…ALVG), and 248 to 264 (FAWY…YFMA).

This sequence belongs to the UppP family.

The protein localises to the cell inner membrane. The catalysed reaction is di-trans,octa-cis-undecaprenyl diphosphate + H2O = di-trans,octa-cis-undecaprenyl phosphate + phosphate + H(+). In terms of biological role, catalyzes the dephosphorylation of undecaprenyl diphosphate (UPP). Confers resistance to bacitracin. The polypeptide is Undecaprenyl-diphosphatase (Nitratidesulfovibrio vulgaris (strain ATCC 29579 / DSM 644 / CCUG 34227 / NCIMB 8303 / VKM B-1760 / Hildenborough) (Desulfovibrio vulgaris)).